A 214-amino-acid polypeptide reads, in one-letter code: MTSLFKKKTVDDVIKEQNKELRGTQRQIARDRTALEKQEKQLEMEIKKMAKTGNRDACKVLAKQLVQVRKQKTRTYAVSSKVTSMSTQTKLMNSQMKMAGAMATTTKTMQAVNKKMDPKKTMQTLQNFQKETAKMDMTEEMMNDTLDEIFEDSGDEEESQDIVNQVLDEIGIEISGKMAHAPSAARKTPSAATAKADGISDEDIERQLKALGVD.

A coiled-coil region spans residues 25–55 (QRQIARDRTALEKQEKQLEMEIKKMAKTGNR). Residues 178–199 (MAHAPSAARKTPSAATAKADGI) are disordered. Positions 202–212 (EDIERQLKALG) match the MIT-interacting motif motif.

The protein belongs to the SNF7 family. In terms of assembly, probable core component of the endosomal sorting required for transport complex III (ESCRT-III). ESCRT-III components are thought to multimerize to form a flat lattice on the perimeter membrane of the endosome.

The protein resides in the cytoplasm. The protein localises to the cytosol. It is found in the late endosome membrane. In terms of biological role, probable core component of the endosomal sorting required for transport complex III (ESCRT-III) which is involved in multivesicular bodies (MVBs) formation and sorting of endosomal cargo proteins into MVBs. MVBs contain intraluminal vesicles (ILVs) that are generated by invagination and scission from the limiting membrane of the endosome and mostly are delivered to lysosomes enabling degradation of membrane proteins, such as stimulated growth factor receptors, lysosomal enzymes and lipids. This Danio rerio (Zebrafish) protein is Charged multivesicular body protein 2b (chmp2b).